Reading from the N-terminus, the 33-residue chain is MSDIN-like toxin proprotein 5 (33 aa).

Residues 1–10 constitute a propeptide that is removed on maturation; it reads MSDINATRLP. Residues 11 to 18 constitute a cross-link (cyclopeptide (Ile-Pro)); that stretch reads IFWFIYFP. Positions 19–32 are excised as a propeptide; sequence CVGDNVDNTLTRGE.

Belongs to the MSDIN fungal toxin family. Post-translationally, processed by the macrocyclase-peptidase enzyme POPB to yield a toxic cyclic octapeptide. POPB first removes 10 residues from the N-terminus. Conformational trapping of the remaining peptide forces the enzyme to release this intermediate rather than proceed to macrocyclization. The enzyme rebinds the remaining peptide in a different conformation and catalyzes macrocyclization of the N-terminal 8 residues.

Functionally, probable toxin that belongs to the MSDIN-like toxin family responsible for a large number of food poisoning cases and deaths. The chain is MSDIN-like toxin proprotein 5 from Amanita phalloides (Death cap).